A 64-amino-acid chain; its full sequence is Phi-buthitoxin-Hj1a (64 aa).

The signal sequence occupies residues 1–18 (MNSFVVVLLLFIAILCNA). 3 cysteine pairs are disulfide-bonded: C29–C43, C36–C49, and C42–C58.

This sequence belongs to the scorpion calcin-like family. Expressed by the venom gland.

It is found in the secreted. May increase intracellular calcium release through the activation of nuclear inositol 1,4,5-trisphosphate receptors (ITPR) of cardiomyocytes, thereby causing an increase in the contraction frequency of these cells. This is Phi-buthitoxin-Hj1a from Hottentotta judaicus (Black scorpion).